Here is a 140-residue protein sequence, read N- to C-terminus: MIVIYHNPDCGTSRNVLQLIEAAGYLPQVIEYVKEGWTKPQLLGLFAAADLTPRSALRTTKSPAAELNLLEETVTDAQILDAMVEYPILVNRPIVCTPKGVRLCRPSEVVLDLLDHWPSGPFAKEDGELIIDERGNRVYT.

C10 serves as the catalytic Nucleophile; cysteine thioarsenate intermediate.

This sequence belongs to the ArsC family.

It carries out the reaction [glutaredoxin]-dithiol + arsenate + glutathione + H(+) = glutathionyl-S-S-[glutaredoxin] + arsenite + H2O. Catalyzes the reduction of arsenate [As(V)] to arsenite [As(III)]. Does not constitute the major arsenate reductase in cells: essential only in the absence of ArsC (AC P74313). The polypeptide is Arsenate reductase ArsI2 (Synechocystis sp. (strain ATCC 27184 / PCC 6803 / Kazusa)).